The sequence spans 431 residues: Acrosin (431 aa).

The signal sequence occupies residues 1-16 (MLPTAVLLVLVVSVVA). A glycan (N-linked (GlcNAc...) asparagine) is linked at N19. Disulfide bonds link C22–C152, C26–C160, C71–C87, C175–C244, C207–C223, and C234–C264. Residues 40-288 (VVGGQAAQQG…FLDWIASRIG (249 aa)) form the Peptidase S1 domain. Catalysis depends on charge relay system residues H86 and D140. N208 is a glycosylation site (N-linked (GlcNAc...) asparagine). S238 (charge relay system) is an active-site residue. Residues 295–385 (IQPATPTPPT…PPPASTKPPQ (91 aa)) are disordered. Positions 331–341 (PHPHPHPHPHP) are enriched in basic residues. Positions 342 to 381 (RPPQPPAAQAPPPPPPPPPPPPPPPPPPPPPPPPPPPAST) are enriched in pro residues. A propeptide spans 351–431 (APPPPPPPPP…TEIPEVTLAS (81 aa)) (pro-rich).

The protein belongs to the peptidase S1 family. In terms of assembly, heavy chain (catalytic) and a light chain linked by two disulfide bonds. Forms a heterodimer with SERPINA5.

It carries out the reaction Preferential cleavage: Arg-|-Xaa, Lys-|-Xaa.. Its activity is regulated as follows. Inhibited by SERPINA5. In terms of biological role, acrosin is the major protease of mammalian spermatozoa. It is a serine protease of trypsin-like cleavage specificity, it is synthesized in a zymogen form, proacrosin and stored in the acrosome. This chain is Acrosin (ACR), found in Oryctolagus cuniculus (Rabbit).